We begin with the raw amino-acid sequence, 614 residues long: Fructokinase-like 2, chloroplastic (614 aa).

A chloroplast-targeting transit peptide spans 1-44; the sequence is MASLSFTQFLSFPRCNADVPCLLQSHGFVKFRGERWNGKQSFSM. Disordered stretches follow at residues 47 to 75 and 542 to 592; these read GRRK…KPSK and GYPP…YVMK. A compositionally biased stretch (acidic residues) spans 548-563; that stretch reads DMEEEEDDEEEDEVES. The segment covering 571–583 has biased composition (basic and acidic residues); it reads ITEKEYRTSKPYD.

Belongs to the carbohydrate kinase PfkB family. Interacts with CITRX/TRXz. Binds to FLN1 and PTAC5. Associates with the plastid-encoded RNA polymerase (PEP) complex.

It is found in the plastid. The protein localises to the chloroplast. In terms of biological role, required for proper chloroplast development, most likely through regulating plastid-encoded polymerase (PEP) dependent chloroplast transcription. Acts as a component of the transcriptionally active plastid chromosome that is required for plastid gene expression. The polypeptide is Fructokinase-like 2, chloroplastic (Arabidopsis thaliana (Mouse-ear cress)).